We begin with the raw amino-acid sequence, 786 residues long: Calcium-independent phospholipase A2-gamma (786 aa).

The N-linked (GlcNAc...) asparagine glycan is linked to Asn-4. 3 disordered regions span residues 158–180, 225–285, and 321–348; these read KKYS…IIDK, KENS…SLPI, and SKSQ…EEKK. Positions 225–245 are enriched in basic and acidic residues; that stretch reads KENSHFQEKSELEGKKVEEGK. Composition is skewed to polar residues over residues 246-258 and 266-285; these read SSSL…TSQA and SAGT…SLPI. The PNPLA domain occupies 449–644; the sequence is LTIDGGGTRG…LLNNPSALAM (196 aa). A GXGXXG motif is present at residues 453 to 458; that stretch reads GGGTRG. Residues 483 to 503 traverse the membrane as a helical segment; that stretch reads ICGVSTGAILAFMLGLFHLPL. The short motif at 485–489 is the GXSXG element; it reads GVSTG. Ser-487 serves as the catalytic Nucleophile. Asp-631 functions as the Proton acceptor in the catalytic mechanism. The DGA/G signature appears at 631-633; the sequence is DGG. An N6-succinyllysine modification is found at Lys-740.

In terms of tissue distribution, expressed in kidney, heart and brain.

Its subcellular location is the endoplasmic reticulum membrane. The protein localises to the mitochondrion membrane. It localises to the peroxisome membrane. The enzyme catalyses a 1,2-diacyl-sn-glycero-3-phosphocholine + H2O = a 1-acyl-sn-glycero-3-phosphocholine + a fatty acid + H(+). It carries out the reaction a 1,2-diacyl-sn-glycero-3-phosphocholine + H2O = a 2-acyl-sn-glycero-3-phosphocholine + a fatty acid + H(+). It catalyses the reaction a 1,2-diacyl-sn-glycero-3-phosphoethanolamine + H2O = a 1-acyl-sn-glycero-3-phosphoethanolamine + a fatty acid + H(+). The catalysed reaction is a 1-O-(1Z-alkenyl)-2-acyl-sn-glycero-3-phosphocholine + H2O = a 1-O-(1Z-alkenyl)-sn-glycero-3-phosphocholine + a fatty acid + H(+). The enzyme catalyses a 1-acyl-sn-glycero-3-phosphocholine + H2O = sn-glycerol 3-phosphocholine + a fatty acid + H(+). It carries out the reaction 1-acyl-2-(9Z,12Z)-octadecadienoyl-sn-glycero-3-phosphocholine + H2O = a 1-acyl-sn-glycero-3-phosphocholine + (9Z,12Z)-octadecadienoate + H(+). It catalyses the reaction 1-acyl-2-(5Z,8Z,11Z,14Z-eicosatetraenoyl)-sn-glycero-3-phosphocholine + H2O = a 1-acyl-sn-glycero-3-phosphocholine + (5Z,8Z,11Z,14Z)-eicosatetraenoate + H(+). The catalysed reaction is 1-hexadecanoyl-2-(5Z,8Z,11Z,14Z-eicosatetraenoyl)-sn-glycero-3-phosphocholine + H2O = 1-hexadecanoyl-sn-glycero-3-phosphocholine + (5Z,8Z,11Z,14Z)-eicosatetraenoate + H(+). The enzyme catalyses 1-octadecanoyl-2-(9Z-octadecenoyl)-sn-glycero-3-phosphocholine + H2O = 1-octadecanoyl-sn-glycero-3-phosphocholine + (9Z)-octadecenoate + H(+). It carries out the reaction 1-hexadecanoyl-2-(9Z-octadecenoyl)-sn-glycero-3-phosphocholine + H2O = 1-hexadecanoyl-sn-glycero-3-phosphocholine + (9Z)-octadecenoate + H(+). It catalyses the reaction 1-hexadecanoyl-2-(9Z,12Z-octadecadienoyl)-sn-glycero-3-phosphocholine + H2O = (9Z,12Z)-octadecadienoate + 1-hexadecanoyl-sn-glycero-3-phosphocholine + H(+). The catalysed reaction is 1-acyl-2-(9Z,12Z)-octadecadienoyl-sn-glycero-3-phosphoethanolamine + H2O = a 1-acyl-sn-glycero-3-phosphoethanolamine + (9Z,12Z)-octadecadienoate + H(+). The enzyme catalyses 1-acyl-2-(5Z,8Z,11Z,14Z)-eicosatetraenoyl-sn-glycero-3-phosphoethanolamine + H2O = a 1-acyl-sn-glycero-3-phosphoethanolamine + (5Z,8Z,11Z,14Z)-eicosatetraenoate + H(+). It carries out the reaction 1-hexadecanoyl-2-(5Z,8Z,11Z,14Z-eicosatetraenoyl)-sn-glycero-3-phosphoethanolamine + H2O = 1-hexadecanoyl-sn-glycero-3-phosphoethanolamine + (5Z,8Z,11Z,14Z)-eicosatetraenoate + H(+). It catalyses the reaction 1-hexadecanoyl-2-(5Z,8Z,11Z,14Z-eicosatetraenoyl)-sn-glycero-3-phosphocholine + H2O = 2-(5Z,8Z,11Z,14Z)-eicosatetraenoyl-sn-glycero-3-phosphocholine + hexadecanoate + H(+). The catalysed reaction is 1-octadecanoyl-2-(9Z-octadecenoyl)-sn-glycero-3-phosphocholine + H2O = 2-(9Z-octadecenoyl)-sn-glycero-3-phosphocholine + octadecanoate + H(+). The enzyme catalyses 1-hexadecanoyl-2-(4Z,7Z,10Z,13Z,16Z,19Z-docosahexaenoyl)-sn-glycero-3-phosphocholine + H2O = 2-(4Z,7Z,10Z,13Z,16Z,19Z-docosahexaenoyl)-sn-glycero-3-phosphocholine + hexadecanoate + H(+). It carries out the reaction 1-O-(1Z)-hexadecenyl-2 (5Z,8Z,11Z,14Z)-eicosatetraenoyl-sn-glycero-3-phosphocholine + H2O = 1-(1Z-hexadecenyl)-sn-glycero-3-phosphocholine + (5Z,8Z,11Z,14Z)-eicosatetraenoate + H(+). It catalyses the reaction 1-O-(1Z-hexadecenyl)-2-(9Z-octadecenoyl)-sn-glycero-3-phosphocholine + H2O = 1-(1Z-hexadecenyl)-sn-glycero-3-phosphocholine + (9Z)-octadecenoate + H(+). The catalysed reaction is 1-hexadecanoyl-sn-glycero-3-phosphocholine + H2O = sn-glycerol 3-phosphocholine + hexadecanoate + H(+). The enzyme catalyses 1',3'-bis-[1,2-di-(9Z,12Z-octadecadienoyl)-sn-glycero-3-phospho]-glycerol + H2O = 1'-[1,2-di-(9Z,12Z-octadecadienoyl)-sn-glycero-3-phospho]-3'-[1-(9Z,12Z-octadecadienoyl)-sn-glycero-3-phospho]-glycerol + (9Z,12Z)-octadecadienoate + H(+). It carries out the reaction 1'-[1-acyl-2-(9-hydroxy-(10E,12Z)-octadecadienoyl)-sn-glycero-3-phospho]-3'-[1,2-diacyl-sn-glycero-3-phospho]-glycerol + H2O = 9-hydroxy-(10E,12Z)-octadecadienoate + 1'-[1,2-diacyl-sn-glycero-3-phospho],3'-[1-acyl-sn-glycero-3-phospho]-glycerol + H(+). Its pathway is phospholipid metabolism. Its activity is regulated as follows. Calcium-independent phospholipase. Functionally, calcium-independent and membrane-bound phospholipase, that catalyzes the esterolytic cleavage of fatty acids from glycerophospholipids to yield free fatty acids and lysophospholipids, hence regulating membrane physical properties and the release of lipid second messengers and growth factors. Hydrolyzes phosphatidylethanolamine, phosphatidylcholine and probably phosphatidylinositol with a possible preference for the former. Has also a broad substrate specificity in terms of fatty acid moieties, hydrolyzing saturated and mono-unsaturated fatty acids at nearly equal rates from either the sn-1 or sn-2 position in diacyl phosphatidylcholine. However, has a weak activity toward polyunsaturated fatty acids at the sn-2 position, and thereby favors the production of 2-arachidonoyl lysophosphatidylcholine, a key branch point metabolite in eicosanoid signaling. On the other hand, can produce arachidonic acid from the sn-1 position of diacyl phospholipid and from the sn-2 position of arachidonate-containing plasmalogen substrates. Therefore, plays an important role in the mobilization of arachidonic acid in response to cellular stimuli and the generation of lipid second messengers. Can also hydrolyze lysophosphatidylcholine. In the mitochondrial compartment, catalyzes the hydrolysis and release of oxidized aliphatic chains from cardiolipin and integrates mitochondrial bioenergetics and signaling. It is essential for maintaining efficient bioenergetic mitochondrial function through tailoring mitochondrial membrane lipid metabolism and composition. The protein is Calcium-independent phospholipase A2-gamma of Oryctolagus cuniculus (Rabbit).